The chain runs to 69 residues: UPF0434 protein Rmet_0534 (69 aa).

This sequence belongs to the UPF0434 family.

The protein is UPF0434 protein Rmet_0534 of Cupriavidus metallidurans (strain ATCC 43123 / DSM 2839 / NBRC 102507 / CH34) (Ralstonia metallidurans).